The chain runs to 119 residues: Immunoglobulin heavy variable 3-72 (119 aa).

An N-terminal signal peptide occupies residues 1–19 (MEFGLSWVFLVVILQGVQC). Residues 20–44 (EVQLVESGGGLVQPGGSLRLSCAAS) are framework-1. Positions 20–119 (EVQLVESGGG…EDTAVYYCAR (100 aa)) constitute an Ig-like domain. A disulfide bridge connects residues cysteine 41 and cysteine 117. Residues 45–52 (GFTFSDHY) form a complementarity-determining-1 region. The framework-2 stretch occupies residues 53–69 (MDWVRQAPGKGLEWVGR). The interval 70 to 79 (TRNKANSYTT) is complementarity-determining-2. The segment at 80 to 117 (EYAASVKGRFTISRDDSKNSLYLQMNSLKTEDTAVYYC) is framework-3. The tract at residues 118 to 119 (AR) is complementarity-determining-3.

As to quaternary structure, immunoglobulins are composed of two identical heavy chains and two identical light chains; disulfide-linked.

Its subcellular location is the secreted. The protein localises to the cell membrane. Its function is as follows. V region of the variable domain of immunoglobulin heavy chains that participates in the antigen recognition. Immunoglobulins, also known as antibodies, are membrane-bound or secreted glycoproteins produced by B lymphocytes. In the recognition phase of humoral immunity, the membrane-bound immunoglobulins serve as receptors which, upon binding of a specific antigen, trigger the clonal expansion and differentiation of B lymphocytes into immunoglobulins-secreting plasma cells. Secreted immunoglobulins mediate the effector phase of humoral immunity, which results in the elimination of bound antigens. The antigen binding site is formed by the variable domain of one heavy chain, together with that of its associated light chain. Thus, each immunoglobulin has two antigen binding sites with remarkable affinity for a particular antigen. The variable domains are assembled by a process called V-(D)-J rearrangement and can then be subjected to somatic hypermutations which, after exposure to antigen and selection, allow affinity maturation for a particular antigen. This Homo sapiens (Human) protein is Immunoglobulin heavy variable 3-72.